A 463-amino-acid polypeptide reads, in one-letter code: Ribosome biogenesis protein NSA1 (463 aa).

This sequence belongs to the NSA1 family. As to quaternary structure, component of the pre-66S ribosomal particle. Interacts with NOP7, RRP1 and RRP5.

It localises to the nucleus. It is found in the nucleolus. In terms of biological role, involved in the biogenesis of the 60S ribosomal subunit. This is Ribosome biogenesis protein NSA1 (NSA1) from Saccharomyces cerevisiae (strain ATCC 204508 / S288c) (Baker's yeast).